The chain runs to 396 residues: Elongation factor Tu (396 aa).

In terms of domain architecture, tr-type G spans 10-206 (KPHVNVGTIG…ALDSYIPTPE (197 aa)). The segment at 19–26 (GHVDHGKT) is G1. Residue 19 to 26 (GHVDHGKT) participates in GTP binding. Mg(2+) is bound at residue threonine 26. The G2 stretch occupies residues 60–64 (GITIN). A G3 region spans residues 81–84 (DCPG). GTP-binding positions include 81 to 85 (DCPGH) and 136 to 139 (NKCD). A G4 region spans residues 136 to 139 (NKCD). Residues 174 to 176 (SAK) are G5.

This sequence belongs to the TRAFAC class translation factor GTPase superfamily. Classic translation factor GTPase family. EF-Tu/EF-1A subfamily. As to quaternary structure, monomer.

It is found in the cytoplasm. It catalyses the reaction GTP + H2O = GDP + phosphate + H(+). Functionally, GTP hydrolase that promotes the GTP-dependent binding of aminoacyl-tRNA to the A-site of ribosomes during protein biosynthesis. This chain is Elongation factor Tu, found in Ralstonia nicotianae (strain ATCC BAA-1114 / GMI1000) (Ralstonia solanacearum).